Here is a 395-residue protein sequence, read N- to C-terminus: NAD(P)H-quinone oxidoreductase subunit H, chloroplastic (395 aa).

It belongs to the complex I 49 kDa subunit family. In terms of assembly, NDH is composed of at least 16 different subunits, 5 of which are encoded in the nucleus.

The protein resides in the plastid. It is found in the chloroplast thylakoid membrane. It carries out the reaction a plastoquinone + NADH + (n+1) H(+)(in) = a plastoquinol + NAD(+) + n H(+)(out). It catalyses the reaction a plastoquinone + NADPH + (n+1) H(+)(in) = a plastoquinol + NADP(+) + n H(+)(out). In terms of biological role, NDH shuttles electrons from NAD(P)H:plastoquinone, via FMN and iron-sulfur (Fe-S) centers, to quinones in the photosynthetic chain and possibly in a chloroplast respiratory chain. The immediate electron acceptor for the enzyme in this species is believed to be plastoquinone. Couples the redox reaction to proton translocation, and thus conserves the redox energy in a proton gradient. The chain is NAD(P)H-quinone oxidoreductase subunit H, chloroplastic from Staurastrum punctulatum (Green alga).